We begin with the raw amino-acid sequence, 648 residues long: MEHIQGAWKTISNGFGLKDAVFDGSSCISPTIVQQFGYQRRASDDGKLTDSSKTSNTIRVFLPNKQRTVVNVRNGMSLHDCLMKALKVRGLQPECCAVFRLLQEHKGKKARLDWNTDAASLIGEELQVDFLDHVPLTTHNFARKTFLKLAFCDICQKFLLNGFRCQTCGYKFHEHCSTKVPTMCVDWSNIRQLLLFPNSTVGDSGVPAPPSFPMRRMRESVSRMPASSQHRYSTPHAFTFNTSSPSSEGSLSQRQRSTSTPNVHMVSTTLHVDSRMIEDAIRSHSESASPSALSSSPNNLSPTGWSQPKTPVPAQRERAPGSGTQEKNKIRPRGQRDSSYYWEIEASEVMLSTRIGSGSFGTVYKGKWHGDVAVKILKVVDPTPEQLQAFRNEVAVLRKTRHVNILLFMGYMTKDNLAIVTQWCEGSSLYKHLHVQETKFQMFQLIDIARQTAQGMDYLHAKNIIHRDMKSNNIFLHEGLTVKIGDFGLATVKSRWSGSQQVEQPTGSVLWMAPEVIRMQDDNPFSFQSDVYSYGIVLYELMAGELPYAHINNRDQIIFMVGRGYASPDLSRLYKNCPKAMKRLVADCVKKVKEERPLFPQILSSIELLQHSLPKINRSASEPSLHRAAHTEDINACTLTTSPRLPVF.

At Ser29 the chain carries Phosphoserine; by MAPK1. Ser43 is subject to Phosphoserine; by PKA and MAPK1. An RBD domain is found at 56–131 (NTIRVFLPNK…IGEELQVDFL (76 aa)). The Phorbol-ester/DAG-type zinc-finger motif lies at 138-184 (THNFARKTFLKLAFCDICQKFLLNGFRCQTCGYKFHEHCSTKVPTMC). Zn(2+) contacts are provided by His139, Cys152, Cys155, Cys165, Cys168, His173, Cys176, and Cys184. The disordered stretch occupies residues 205 to 265 (GVPAPPSFPM…RSTSTPNVHM (61 aa)). The residue at position 233 (Ser233) is a Phosphoserine; by PKA. Residues 239 to 265 (TFNTSSPSSEGSLSQRQRSTSTPNVHM) show a composition bias toward polar residues. Ser252 bears the Phosphoserine mark. Ser259 carries the post-translational modification Phosphoserine; by PKA, PKC and PKB/AKT1. Thr268 carries the phosphothreonine; by autocatalysis modification. A Phosphothreonine; by PKA modification is found at Thr269. Positions 281 to 335 (IRSHSESASPSALSSSPNNLSPTGWSQPKTPVPAQRERAPGSGTQEKNKIRPRGQ) are disordered. Over residues 286 to 301 (ESASPSALSSSPNNLS) the composition is skewed to low complexity. Phosphoserine; by MAPK1 is present on residues Ser289, Ser296, and Ser301. Positions 331-349 (RPRGQRDSSYYWEIEASEV) are interaction with PEBP1/RKIP. Residue Ser338 is modified to Phosphoserine; by PAK1, PAK2, PAK3 and PAK5. Ser339 bears the Phosphoserine; by PAK1, PAK2 and PAK3 mark. Phosphotyrosine; by SRC is present on residues Tyr340 and Tyr341. The 261-residue stretch at 349 to 609 (VMLSTRIGSG…PQILSSIELL (261 aa)) folds into the Protein kinase domain. ATP is bound by residues 355–363 (IGSGSFGTV) and Lys375. Asp468 functions as the Proton acceptor in the catalytic mechanism. Ser471 carries the post-translational modification Phosphoserine. Thr491 is subject to Phosphothreonine. Position 494 is a phosphoserine (Ser494). Residues Ser497 and Ser499 each carry the phosphoserine; by PKC modification. Arg563 carries the post-translational modification Symmetric dimethylarginine; by PRMT5. Phosphoserine is present on Ser621. The residue at position 642 (Ser642) is a Phosphoserine; by MAPK1.

The protein belongs to the protein kinase superfamily. TKL Ser/Thr protein kinase family. RAF subfamily. Monomer. Homodimer. Heterodimerizes with BRAF and this heterodimer possesses a highly increased kinase activity compared to the respective homodimers or monomers. Heterodimerization is mitogen-regulated and enhanced by 14-3-3 proteins. MAPK1/ERK2 activation can induce a negative feedback that promotes the dissociation of the heterodimer. Forms a multiprotein complex with Ras (M-Ras/MRAS), SHOC2 and protein phosphatase 1 (PPP1CA, PPP1CB and PPP1CC). Interacts with LZTR1. Interacts with Ras proteins; the interaction is antagonized by RIN1. Weakly interacts with RIT1. Interacts (via N-terminus) with RGS14 (via RBD domains); the interaction mediates the formation of a ternary complex with BRAF, a ternary complex inhibited by GNAI1. Probably forms a complex composed of chaperones HSP90 and HSP70, co-chaperones CDC37, PPP5C, TSC1 and client protein TSC2, CDK4, AKT, RAF1 and NR3C1; this complex does not contain co-chaperones STIP1/HOP and PTGES3/p23. Interacts with STK3/MST2; the interaction inhibits its pro-apoptotic activity. Interacts (when phosphorylated at Ser-259) with YWHAZ (unphosphorylated at 'Thr-232'). Interacts with MAP2K1/MEK1 and MAP2K2/MEK2. Interacts with MAP3K5/ASF1 (via N-terminus) and this interaction inhibits the proapoptotic function of MAP3K5/ASK1. Interacts with PAK1 (via kinase domain). The Ser-338 and Ser-339 phosphorylated form (by PAK1) interacts with BCL2. Interacts with PEBP1/RKIP and this interaction is enhanced if RAF1 is phosphorylated on residues Ser-338, Ser-339, Tyr-340 and Tyr-341. Interacts with ADCY2, ADCY5, ADCY6, DGKH, RCAN1/DSCR1, PPP1R12A, PKB/AKT1, SPRY2, SPRY4, CNKSR1/CNK1, KSR2 and PHB/prohibitin. The phosphorylated form interacts with PIN1. Interacts with PPP2CA, PPP2R1B and ROCK2. In its active form, interacts with PRMT5. Interacts with FAM83B; displaces 14-3-3 proteins from RAF1 and activates RAF1. Interacts with PDE8A; the interaction promotes RAF1 activity. Interacts with MFHAS1. Interacts with GLS. Interacts with NEK10 and MAP2K1; the interaction is direct with NEK10 and required for ERK1/2-signaling pathway activation in response to UV irradiation. Zn(2+) serves as cofactor. Post-translationally, phosphorylation at Thr-269, Ser-338, Tyr-341, Thr-491 and Ser-494 results in its activation. Phosphorylation at Ser-29, Ser-43, Ser-289, Ser-296, Ser-301 and Ser-642 by MAPK1/ERK2 results in its inactivation. Phosphorylation at Ser-259 induces the interaction with YWHAZ and inactivates kinase activity. Dephosphorylation of Ser-259 by the SHOC2-MRAS-PP1c (SMP) complex consisting of SHOC2, GTP-bound M-Ras/MRAS and the catalytic subunit of protein phosphatase 1 (PPP1CA, PPP1CB or PPP1CC); this relieves inactivation and stimulates kinase activity. Phosphorylation at Ser-338 by PAK1 and PAK5 and Ser-339 by PAK1 is required for its mitochondrial localization. Phosphorylation at Ser-621 in response to growth factor treatment stabilizes the protein, possibly by preventing proteasomal degradation. Phosphorylation at Ser-289, Ser-296, Ser-301, Ser-338 and Ser-621 are somehow linked to the methylation potential of cells. Treatment of cells with HGF in the presence of the methylation inhibitor 5'-methylthioadenosine (MTA) results in increased phosphorylation at Ser-338 and Ser-621 and decreased phosphorylation at Ser-296, Ser-301 and Ser-338. Dephosphorylation at Ser-338 by PPP5C results in a decreased of activity. In terms of processing, methylated at Arg-563 in response to EGF treatment. This modification leads to destabilization of the protein, possibly through proteasomal degradation. In terms of tissue distribution, present in all tissues tested: testis, ovary, small intestine, colon, peripheral blood leukocytes, fetal liver, bone marrow, thymus, lymph node and spleen, and the cell lines melanoma G-361, lung carcinoma A-549, colorectal adenocarcinoma SW480, Burkitt's lymphoma Raji and lymphoblastic leukemia MOLT-4. In skeletal muscle, isoform 1 is more abundant than isoform 2.

It is found in the cytoplasm. The protein localises to the cell membrane. Its subcellular location is the mitochondrion. It localises to the nucleus. The catalysed reaction is L-seryl-[protein] + ATP = O-phospho-L-seryl-[protein] + ADP + H(+). It catalyses the reaction L-threonyl-[protein] + ATP = O-phospho-L-threonyl-[protein] + ADP + H(+). Its activity is regulated as follows. Regulation is a highly complex process involving membrane recruitment, protein-protein interactions, dimerization, and phosphorylation/dephosphorylation events. Ras-GTP recruits RAF1 to the membrane, thereby promoting its activation. The inactive conformation of RAF1 is maintained by autoinhibitory interactions occurring between the N-terminal regulatory and the C-terminal catalytic domains and by the binding of a 14-3-3 protein that contacts two phosphorylation sites, Ser-259 and Ser-621. Upon mitogenic stimulation, Ras and PPP2R1A cooperate to release autoinhibition and the subsequent phosphorylation of activating sites: Ser-338, Tyr-341, Thr-491, and Ser-494, yields a fully active kinase. Through a negative feedback mechanism involving MAPK1/ERK2, RAF1 is phosphorylated on Ser-29, Ser-43, Ser-289, Ser-296, Ser-301 and Ser-642 by MAPK1/ERK2, which yields an inactive, desensitized kinase. The signaling-competent conformation of RAF1 is finally re-established by the coordinated action of PIN1, a prolyl isomerase that converts pSer and pThr residues from the cis to the trans conformation, which is preferentially recognized and dephosphorylated by PPP2R1A. Activated by homodimerization and heterodimerization (with BRAF). Also regulated through association with other proteins such as KSR2, CNKSR1/CNK1, PEBP1/RKIP, PHB/prohibitin and SPRY4. PEBP1/RKIP acts by dissociating RAF1 from its substrates MAP2K1/MEK1 and MAP2K2/MEK2. PHB/prohibitin facilitates the displacement of 14-3-3 from RAF1 by activated Ras, thereby promoting cell membrane localization and phosphorylation of RAF1 at the activating Ser-338. SPRY4 inhibits Ras-independent, but not Ras-dependent, activation of RAF1. CNKSR1/CNK1 regulates Src-mediated RAF1 activation. Functionally, serine/threonine-protein kinase that acts as a regulatory link between the membrane-associated Ras GTPases and the MAPK/ERK cascade, and this critical regulatory link functions as a switch determining cell fate decisions including proliferation, differentiation, apoptosis, survival and oncogenic transformation. RAF1 activation initiates a mitogen-activated protein kinase (MAPK) cascade that comprises a sequential phosphorylation of the dual-specific MAPK kinases (MAP2K1/MEK1 and MAP2K2/MEK2) and the extracellular signal-regulated kinases (MAPK3/ERK1 and MAPK1/ERK2). The phosphorylated form of RAF1 (on residues Ser-338 and Ser-339, by PAK1) phosphorylates BAD/Bcl2-antagonist of cell death at 'Ser-75'. Phosphorylates adenylyl cyclases: ADCY2, ADCY5 and ADCY6, resulting in their activation. Phosphorylates PPP1R12A resulting in inhibition of the phosphatase activity. Phosphorylates TNNT2/cardiac muscle troponin T. Can promote NF-kB activation and inhibit signal transducers involved in motility (ROCK2), apoptosis (MAP3K5/ASK1 and STK3/MST2), proliferation and angiogenesis (RB1). Can protect cells from apoptosis also by translocating to the mitochondria where it binds BCL2 and displaces BAD/Bcl2-antagonist of cell death. Plays a role in the oncogenic transformation of epithelial cells via repression of the TJ protein, occludin (OCLN) by inducing the up-regulation of a transcriptional repressor SNAI2/SLUG, which induces down-regulation of OCLN. Restricts caspase activation in response to selected stimuli, notably Fas stimulation, pathogen-mediated macrophage apoptosis, and erythroid differentiation. Regulates Rho signaling and migration, and is required for normal wound healing. The protein is RAF proto-oncogene serine/threonine-protein kinase (Raf1) of Mus musculus (Mouse).